The sequence spans 231 residues: Probable cell wall protein ARB_06477 (231 aa).

Residues 1–17 (MRSVLYLLFTAVAAVAA) form the signal peptide. Residues 107-206 (TPSFMVDGAT…TGMPTSSGAP (100 aa)) are disordered. The span at 121 to 204 (TGPTTSRTSM…SSTGMPTSSG (84 aa)) shows a compositional bias: low complexity. The GPI-anchor amidated serine moiety is linked to residue serine 203. The propeptide at 204-231 (GAPDPNGAVSLALPGGLLSIVLSLMALL) is removed in mature form.

This sequence belongs to the SRP1/TIP1 family. Post-translationally, the GPI-anchor is attached to the protein in the endoplasmic reticulum and serves to target the protein to the cell surface. There, the glucosamine-inositol phospholipid moiety is cleaved off and the GPI-modified mannoprotein is covalently attached via its lipidless GPI glycan remnant to the 1,6-beta-glucan of the outer cell wall layer.

It is found in the cell membrane. Its subcellular location is the secreted. It localises to the cell wall. Functionally, probable component of the cell wall. The chain is Probable cell wall protein ARB_06477 from Arthroderma benhamiae (strain ATCC MYA-4681 / CBS 112371) (Trichophyton mentagrophytes).